Here is a 485-residue protein sequence, read N- to C-terminus: Cysteine--tRNA ligase (485 aa).

Cysteine 27 provides a ligand contact to Zn(2+). The 'HIGH' region motif lies at 29-39 (ITAYDFSHIGH). Residues cysteine 208, histidine 233, and glutamate 237 each contribute to the Zn(2+) site. Residues 265–269 (KMSKS) carry the 'KMSKS' region motif. Lysine 268 contributes to the ATP binding site.

The protein belongs to the class-I aminoacyl-tRNA synthetase family. Monomer. The cofactor is Zn(2+).

Its subcellular location is the cytoplasm. The catalysed reaction is tRNA(Cys) + L-cysteine + ATP = L-cysteinyl-tRNA(Cys) + AMP + diphosphate. The polypeptide is Cysteine--tRNA ligase (Lawsonia intracellularis (strain PHE/MN1-00)).